We begin with the raw amino-acid sequence, 341 residues long: L-threonine 3-dehydrogenase (341 aa).

Zn(2+) is bound at residue Cys-38. Residues Thr-40 and His-43 each act as charge relay system in the active site. Positions 63, 64, 93, 96, 99, and 107 each coordinate Zn(2+). Residues Ile-175, Asp-195, Arg-200, 262–264 (LGI), and 286–287 (IY) each bind NAD(+).

Belongs to the zinc-containing alcohol dehydrogenase family. As to quaternary structure, homotetramer. Requires Zn(2+) as cofactor.

It localises to the cytoplasm. It catalyses the reaction L-threonine + NAD(+) = (2S)-2-amino-3-oxobutanoate + NADH + H(+). Its pathway is amino-acid degradation; L-threonine degradation via oxydo-reductase pathway; glycine from L-threonine: step 1/2. In terms of biological role, catalyzes the NAD(+)-dependent oxidation of L-threonine to 2-amino-3-ketobutyrate. The chain is L-threonine 3-dehydrogenase from Shewanella sp. (strain MR-7).